The chain runs to 37 residues: Large ribosomal subunit protein bL36c (37 aa).

As to quaternary structure, component of the chloroplast large ribosomal subunit (LSU). Mature 70S chloroplast ribosomes of higher plants consist of a small (30S) and a large (50S) subunit. The 30S small subunit contains 1 molecule of ribosomal RNA (16S rRNA) and 24 different proteins. The 50S large subunit contains 3 rRNA molecules (23S, 5S and 4.5S rRNA) and 33 different proteins.

Its subcellular location is the plastid. The protein localises to the chloroplast. In terms of biological role, component of the chloroplast ribosome (chloro-ribosome), a dedicated translation machinery responsible for the synthesis of chloroplast genome-encoded proteins, including proteins of the transcription and translation machinery and components of the photosynthetic apparatus. This is Large ribosomal subunit protein bL36c (rpl36) from Spinacia oleracea (Spinach).